We begin with the raw amino-acid sequence, 1160 residues long: Carbamoyl phosphate synthase arginine-specific large chain, mitochondrial (1160 aa).

Residues 81–478 are carboxyphosphate synthetic domain; it reads AEHEKVKKVV…SLQKALRQVD (398 aa). ATP is bound by residues arginine 208, arginine 248, glycine 254, glycine 255, lysine 285, leucine 287, glutamate 292, glycine 318, isoleucine 319, histidine 320, glutamine 361, and glutamate 375. The 193-residue stretch at 212–404 folds into the ATP-grasp 1 domain; it reads AKALNEINIP…LAYTAAKIAL (193 aa). Glutamine 361, glutamate 375, and asparagine 377 together coordinate Mg(2+). The Mn(2+) site is built by glutamine 361, glutamate 375, and asparagine 377. The interval 479-623 is oligomerization domain; that stretch reads PSFLGFMAMP…YTSYNASSHD (145 aa). The segment at 624–1012 is carbamoyl phosphate synthetic domain; the sequence is IDFNEHGTMV…AYWAALQSTQ (389 aa). Residues 748–946 form the ATP-grasp 2 domain; the sequence is SQILDKIGVD…FIDVATRSII (199 aa). ATP is bound by residues arginine 784, lysine 823, isoleucine 825, glutamate 830, glycine 855, valine 856, histidine 857, serine 858, glutamine 898, and glutamate 917. Glutamine 898, glutamate 917, and asparagine 919 together coordinate Mg(2+). Mn(2+) contacts are provided by glutamine 898, glutamate 917, and asparagine 919. The tract at residues 1013 to 1144 is allosteric domain; the sequence is NFKIPLPGQG…PSVLSEKKEM (132 aa). An MGS-like domain is found at 1014–1160; that stretch reads FKIPLPGQGI…WSEWIGSHDL (147 aa).

It belongs to the CarB family. Heterodimer composed of 2 chains; the small (or glutamine) chain promotes the hydrolysis of glutamine to ammonia, which is used by the large (or ammonia) chain to synthesize carbamoyl phosphate. Requires Mg(2+) as cofactor. Mn(2+) serves as cofactor.

It is found in the mitochondrion. It catalyses the reaction hydrogencarbonate + L-glutamine + 2 ATP + H2O = carbamoyl phosphate + L-glutamate + 2 ADP + phosphate + 2 H(+). The catalysed reaction is hydrogencarbonate + NH4(+) + 2 ATP = carbamoyl phosphate + 2 ADP + phosphate + 2 H(+). Its pathway is amino-acid biosynthesis; L-arginine biosynthesis; carbamoyl phosphate from bicarbonate: step 1/1. Its function is as follows. Large subunit of the arginine-specific carbamoyl phosphate synthase (CPSase). CPSase catalyzes the formation of carbamoyl phosphate from the ammonia moiety of glutamine, hydrogencarbonate, and phosphate donated by ATP, the first step of the arginine biosynthetic pathway. The large subunit (synthetase) binds the substrates ammonia (free or transferred from glutamine from the small subunit), hydrogencarbonate and ATP and carries out an ATP-coupled ligase reaction, activating hydrogencarbonate by forming carboxy phosphate which reacts with ammonia to form carbamoyl phosphate. The polypeptide is Carbamoyl phosphate synthase arginine-specific large chain, mitochondrial (arg4) (Schizosaccharomyces pombe (strain 972 / ATCC 24843) (Fission yeast)).